The following is a 1134-amino-acid chain: MTMTANKNSSITHGTGGTKAPRETLSRSQSVSPPPVLYPPRSPIYPLSDSETSACRYPSHSKSQVLLKDRHSRNPSLLGQDPSPETSPPICTLKATSFSYLDRTPSLRKREDQKETVQGAVQDVEGVAACLPLAQSTPFLGAGSRSVLLSCTGTRAHSLGIREKISAWEGRREASPRMSLCGEKREGPGSEWSVSEGCPSVGCPSVVPSPCSSEKTFDFKGLRRMSRTFSECSYPETEEEAEALPGRDSLYRLEKRPGRTEPSALLRGHGIRKESSAVLSRIQKIEQALKEQPGRGLPQLPSSCYSVDQGRRKTGTLGTLEEPTGTASVSPSSRAGGVAGVAGEAGPPLDREGSASMKSETPGNSSSPQLLPPKSSPDPAVNPVPKPKRTFEYEADKNPKTKPSNGLPPSPTPAAPPPLPSTPAPPVTRRPKKDMRGHRKSQNRKSFEFEDASSLQSLYPSSPTENGTESQPKFGSKSTLEENAYEDIVGGLPKENPYEDVDLKNRRAGRKSQQLSENSLDSLHRMWSPQDRKYNHPPMQLSLKSNSQSLRSGNWSERKSHRLPRLPKRHSHDDMMLLAQLSLPSSPSSLNEDSLSTTSELLSSRRSRRIPKLVQRINSIYNAKRGKKRLKKLSMSSLETASLRDENSESESDSDDRFKAHTQRLVHIQSMLKRAPSYRTLELELLEWQERELFEYFVVVSLKKKPSRNTYLPEVSYQFPKLDRPTKQMREAEERLKAIPQFCFPDAKDWLPVSEYSSETFSFMLTGEDGSRRFGYCRRLLPSGKGPRLPEVYCVISRLGCFGLFSKVLDEVERRRGISAALVYPFMRSLMESPFPAPGKTIKVKTFLPGAGNEVLELRRPMDSRLEHVDFECLFTCLSVRQLIRIFASLLLERRVIFVADKLSTLSSCSHAVVALLYPFSWQHTFIPVLPASMIDIVCCPTPFLVGLLSSSLPKLKELPVEEALMVNLGSDRFIRQMDDEDTLLPRKLQAALEQALERKSELISQDSDSDSDDECNTLNGLVSEVFIRFFVETVGHYSLFLTHSEKGERAFQREAFRKSVASKSIRRFLEVFMESQMFAGFIQDRELRKCRAKGLFEQRVEQYLEELPDTEQSGMNKFLRGLGNKMKFLHKKN.

The span at 1 to 13 (MTMTANKNSSITH) shows a compositional bias: polar residues. Positions 1-90 (MTMTANKNSS…DPSPETSPPI (90 aa)) are disordered. A phosphoserine mark is found at Ser30 and Ser32. Residues 32–43 (SPPPVLYPPRSP) show a composition bias toward pro residues. Residue Thr228 is modified to Phosphothreonine. Position 230 is a phosphoserine (Ser230). 2 disordered regions span residues 233–273 (SYPE…GIRK) and 289–571 (LKEQ…KRHS). Positions 249–259 (SLYRLEKRPGR) are enriched in basic and acidic residues. The span at 315 to 348 (GTLGTLEEPTGTASVSPSSRAGGVAGVAGEAGPP) shows a compositional bias: low complexity. Residue Thr361 is modified to Phosphothreonine. Ser365 carries the post-translational modification Phosphoserine. Residues 370–385 (LLPPKSSPDPAVNPVP) show a composition bias toward pro residues. Over residues 389-399 (RTFEYEADKNP) the composition is skewed to basic and acidic residues. Residues 406–428 (GLPPSPTPAAPPPLPSTPAPPVT) show a composition bias toward pro residues. Positions 429 to 443 (RRPKKDMRGHRKSQN) are enriched in basic residues. Polar residues predominate over residues 453–478 (SSLQSLYPSSPTENGTESQPKFGSKS). Thr479 carries the phosphothreonine modification. Composition is skewed to polar residues over residues 511–521 (KSQQLSENSLD) and 542–555 (SLKS…SGNW). Position 542 is a phosphoserine (Ser542). Residues 559-570 (KSHRLPRLPKRH) show a composition bias toward basic residues. Ser571 and Ser619 each carry phosphoserine. Residues 633 to 658 (LSMSSLETASLRDENSESESDSDDRF) are disordered. A uDENN domain is found at 695–843 (EYFVVVSLKK…PFPAPGKTIK (149 aa)). In terms of domain architecture, cDENN spans 865 to 998 (RLEHVDFECL…LQAALEQALE (134 aa)). A dDENN domain is found at 1000–1093 (KSELISQDSD…QDRELRKCRA (94 aa)).

As to quaternary structure, interacts with ITSN1 and GRB2. Isoform 1 interacts with the SH3 domain of ABL1. Post-translationally, phosphorylated. Phosphorylation decreases ITSN1 binding.

It is found in the cytoplasm. Its subcellular location is the cell cortex. It localises to the cell membrane. The protein resides in the recycling endosome. May be involved in cytoskeletal organization and tumorogenicity. Seems to be involved in a signaling transduction pathway leading to activation of MAPK1/ERK2. Plays a role in EGFR trafficking from recycling endosomes back to the cell membrane. Functionally, guanine nucleotide exchange factor (GEF) which may activate RAB9A and RAB9B. Promotes the exchange of GDP to GTP, converting inactive GDP-bound Rab proteins into their active GTP-bound form. In terms of biological role, may block ERK2 activation stimulated by ABL1. May alter cell morphology and cell growth. This is DENN domain-containing protein 2B (Dennd2b) from Mus musculus (Mouse).